Reading from the N-terminus, the 345-residue chain is Phosphoribosylformylglycinamidine cyclo-ligase (345 aa).

This sequence belongs to the AIR synthase family.

It localises to the cytoplasm. It catalyses the reaction 2-formamido-N(1)-(5-O-phospho-beta-D-ribosyl)acetamidine + ATP = 5-amino-1-(5-phospho-beta-D-ribosyl)imidazole + ADP + phosphate + H(+). Its pathway is purine metabolism; IMP biosynthesis via de novo pathway; 5-amino-1-(5-phospho-D-ribosyl)imidazole from N(2)-formyl-N(1)-(5-phospho-D-ribosyl)glycinamide: step 2/2. This chain is Phosphoribosylformylglycinamidine cyclo-ligase, found in Histophilus somni (strain 2336) (Haemophilus somnus).